A 179-amino-acid polypeptide reads, in one-letter code: ATP synthase subunit delta (179 aa).

Belongs to the ATPase delta chain family. In terms of assembly, F-type ATPases have 2 components, F(1) - the catalytic core - and F(0) - the membrane proton channel. F(1) has five subunits: alpha(3), beta(3), gamma(1), delta(1), epsilon(1). F(0) has three main subunits: a(1), b(2) and c(10-14). The alpha and beta chains form an alternating ring which encloses part of the gamma chain. F(1) is attached to F(0) by a central stalk formed by the gamma and epsilon chains, while a peripheral stalk is formed by the delta and b chains.

It localises to the cell membrane. Functionally, f(1)F(0) ATP synthase produces ATP from ADP in the presence of a proton or sodium gradient. F-type ATPases consist of two structural domains, F(1) containing the extramembraneous catalytic core and F(0) containing the membrane proton channel, linked together by a central stalk and a peripheral stalk. During catalysis, ATP synthesis in the catalytic domain of F(1) is coupled via a rotary mechanism of the central stalk subunits to proton translocation. This protein is part of the stalk that links CF(0) to CF(1). It either transmits conformational changes from CF(0) to CF(1) or is implicated in proton conduction. The sequence is that of ATP synthase subunit delta from Bacillus sp. (strain PS3).